Here is a 908-residue protein sequence, read N- to C-terminus: Oxysterol-binding protein 2 (908 aa).

A disordered region spans residues 42-112; that stretch reads SAFGSGPASK…GLWPGSENGT (71 aa). Residues 81–90 are compositionally biased toward polar residues; that stretch reads EPGSQTTSVP. Residues 179 to 271 form the PH domain; sequence LDSYKGWLLK…WITALELAKA (93 aa). 3 disordered regions span residues 279–299, 413–445, and 822–843; these read TQSDDSGDDDEEPAAPADNSE, RAFCNTPGGPASSSKSFSEGSFLTSKGENSEED, and LMERGRWDEANTEKQRLEEKQR. Ser-284 carries the phosphoserine modification. Low complexity predominate over residues 424-437; the sequence is SSSKSFSEGSFLTS.

It belongs to the OSBP family. As to quaternary structure, interacts with CCDC159. In terms of tissue distribution, expressed in the testis (at protein level). Expressed in postmeiotic germ cells of the testis.

It localises to the membrane. The protein resides in the cytoplasmic vesicle. The protein localises to the secretory vesicle. Its subcellular location is the acrosome. Functionally, binds 7-ketocholesterol. Acts during spermatid development where its function is required prior to the removal of cytoplasm from the sperm head. The sequence is that of Oxysterol-binding protein 2 (Osbp2) from Mus musculus (Mouse).